The following is a 419-amino-acid chain: MLSARTMKEVVYWSPKKVADWLLENAMPEYCEPLEHFTGQDLINLTQEDFKKPPLYRVSSDNGQRLLDMIETLKMEHHMEAHKNGHANGHLSIGVDIPNPDGSFSIKTKPNGMPNGFRKEMIKIPMPEPERSQYPMEWGKTFLAFLYALSCFVLTTVMISVVHERVPPKEVQPPLPDTFFDHFNRVQWAFSICEINGMILVGLWLFQWLLLKYKSIISRRFFCIVGTLYLYRCITMYVTTLPVPGMHFNCSPKLFGDWEAQVRRIMKLIAGGGLSITGSHNMCGDYLYSGHTVMLTLTYLFIKEYSPRRLWWYHWICWLLSVVGIFCILLAHDHYTVDVVVAYYITTRLFWWYHTMANQQVLKEASQMNLLARVWWYRPFQYFEKNVQGIVPRSYHWPFPWPVVHLSRQVKYSRLVNDT.

One can recognise an SAM domain in the interval 13–76 (WSPKKVADWL…LDMIETLKME (64 aa)). Position 14 is a phosphoserine (Ser-14). The next 5 helical transmembrane spans lie at 142–162 (FLAF…ISVV), 190–210 (FSIC…QWLL), 221–241 (FFCI…VTTL), 282–302 (MCGD…YLFI), and 310–330 (LWWY…CILL). The active site involves His-291. Residues 331–419 (AHDHYTVDVV…VKYSRLVNDT (89 aa)) are Cytoplasmic-facing. Catalysis depends on residues His-334 and Asp-338.

Belongs to the sphingomyelin synthase family. Isoform 1 is widely expressed, isoform 2 shows a more narrow distribution and isoform 3 is detected only in testis and heart.

It localises to the golgi apparatus membrane. The enzyme catalyses an N-acylsphing-4-enine + a 1,2-diacyl-sn-glycero-3-phosphocholine = a sphingomyelin + a 1,2-diacyl-sn-glycerol. It catalyses the reaction 1-(9Z-octadecenoyl)-2-acyl-sn-3-glycerol + a sphingomyelin = a 1-(9Z-octadecenoyl)-2-acyl-sn-glycero-3-phosphocholine + an N-acylsphing-4-enine. The catalysed reaction is N-hexadecanoylsphinganine + a 1,2-diacyl-sn-glycero-3-phosphocholine = N-hexadecanoyl-sphinganine-1-phosphocholine + a 1,2-diacyl-sn-glycerol. It carries out the reaction N-hexadecanoyl-(4R)-hydroxysphinganine + a 1,2-diacyl-sn-glycero-3-phosphocholine = N-hexadecanoyl-(4R)-hydroxysphinganine-phosphocholine + a 1,2-diacyl-sn-glycerol. The enzyme catalyses an N-acylsphing-4-enine + a 1,2-diacyl-sn-glycero-3-phosphoethanolamine = an N-acylsphing-4-enine 1-phosphoethanolamine + a 1,2-diacyl-sn-glycerol. Its pathway is sphingolipid metabolism. Its function is as follows. Major sphingomyelin synthase at the Golgi apparatus. Catalyzes the reversible transfer of phosphocholine moiety in sphingomyelin biosynthesis: in the forward reaction transfers phosphocholine head group of phosphatidylcholine (PC) on to ceramide (CER) to form ceramide phosphocholine (sphingomyelin, SM) and diacylglycerol (DAG) as by-product, and in the reverse reaction transfers phosphocholine from SM to DAG to form PC and CER. The direction of the reaction depends on the levels of CER and DAG in Golgi membranes. Converts the newly synthesized CER, that is transported from the endoplasmic reticulum to the trans-Golgi by the Cer transport protein (CERT), to SM. Can form a heteromeric complex with glucosylceramide synthase (GCS) increasing SMS activity and reducing glucosylceramide synthesis, a critical mechanism that controls the metabolic fate of CER in the Golgi. Does not use free phosphorylcholine or CDP-choline as donor. Can also transfer phosphoethanolamine head group of phosphatidylethanolamine (PE) on to CER to form ceramide phosphoethanolamine (CPE). Regulates receptor-mediated signal transduction via mitogenic DAG and proapoptotic CER, as well as via SM, a structural component of membrane rafts that serve as platforms for signal transduction and protein sorting. Plays a role in secretory transport via regulation of DAG pool at the Golgi apparatus and its downstream effects on PRKD1. In terms of biological role, (Microbial infection) Contributes to the brain SM production for Japanese encephalitis virus attachment and infection. This Mus musculus (Mouse) protein is Phosphatidylcholine:ceramide cholinephosphotransferase 1 (Sgms1).